Here is a 421-residue protein sequence, read N- to C-terminus: Acyl-coenzyme A thioesterase 6 (421 aa).

Active-site charge relay system residues include Ser-232, Asp-326, and His-360. The Peroxisome targeting signal motif lies at 419–421 (SKI).

This sequence belongs to the C/M/P thioester hydrolase family.

It localises to the peroxisome. The protein localises to the cytoplasm. The enzyme catalyses pristanoyl-CoA + H2O = 2,6,10,14-tetramethylpentadecanoate + CoA + H(+). The catalysed reaction is phytanoyl-CoA + H2O = 3,7,11,15-tetramethylhexadecanoate + CoA + H(+). The protein operates within lipid metabolism; fatty acid metabolism. Its function is as follows. Catalyzes the hydrolysis of acyl-CoAs into free fatty acids and coenzyme A (CoASH), regulating their respective intracellular levels. Catalyzes the hydrolysis of phytanoyl-CoA and pristanoyl-CoA, two methyl-branched fatty acids derived from phytol, that enter the body via the diet. This chain is Acyl-coenzyme A thioesterase 6, found in Homo sapiens (Human).